The following is a 464-amino-acid chain: ATP synthase subunit beta 2 (464 aa).

Gly-147–Thr-154 serves as a coordination point for ATP.

The protein belongs to the ATPase alpha/beta chains family. In terms of assembly, F-type ATPases have 2 components, CF(1) - the catalytic core - and CF(0) - the membrane proton channel. CF(1) has five subunits: alpha(3), beta(3), gamma(1), delta(1), epsilon(1). CF(0) has four main subunits: a(1), b(1), b'(1) and c(9-12).

The protein resides in the cell inner membrane. It catalyses the reaction ATP + H2O + 4 H(+)(in) = ADP + phosphate + 5 H(+)(out). Produces ATP from ADP in the presence of a proton gradient across the membrane. The catalytic sites are hosted primarily by the beta subunits. The sequence is that of ATP synthase subunit beta 2 from Cereibacter sphaeroides (strain ATCC 17029 / ATH 2.4.9) (Rhodobacter sphaeroides).